We begin with the raw amino-acid sequence, 443 residues long: 3-isopropylmalate dehydratase large subunit (443 aa).

The [4Fe-4S] cluster site is built by Cys347, Cys407, and Cys410.

It belongs to the aconitase/IPM isomerase family. LeuC type 1 subfamily. As to quaternary structure, heterodimer of LeuC and LeuD. The cofactor is [4Fe-4S] cluster.

The enzyme catalyses (2R,3S)-3-isopropylmalate = (2S)-2-isopropylmalate. The protein operates within amino-acid biosynthesis; L-leucine biosynthesis; L-leucine from 3-methyl-2-oxobutanoate: step 2/4. Its function is as follows. Catalyzes the isomerization between 2-isopropylmalate and 3-isopropylmalate, via the formation of 2-isopropylmaleate. The polypeptide is 3-isopropylmalate dehydratase large subunit (Buchnera aphidicola subsp. Uroleucon aeneum).